Reading from the N-terminus, the 578-residue chain is Monooxygenase cfoE (578 aa).

A helical membrane pass occupies residues 549–569 (IVLSGVPLVVFGSLHLVLWIF).

This sequence belongs to the FMO family. Requires FAD as cofactor.

The protein resides in the membrane. The protein operates within secondary metabolite biosynthesis; flavonoid biosynthesis. Functionally, monooxygenase; part of the gene cluster that mediates the biosynthesis of chlorflavonin, a fungal flavonoid with acetolactate synthase inhibitory activity. Within the pathway, cfoE is responsible for the chlorination of the flavonoid skeleton at position C3'. The pathway begins with the PKS-NRPS hybrid synthetase cfoA that uses benzoic acid or p-hydroxybenzoic acid as a starter unit with four rounds of chain elongation using malonyl-CoA to form the chalcone skeleton. Then, a new type of chalcone isomerase, cfoK, catalyzes the conversion of the chalcone into a flavanone by a histidine-mediated oxa-Michael addition mechanism. The desaturation of flavanone to flavone is catalyzed by a new type of flavone synthase, the flavin mononucleotide (FMN)-dependent oxidoreductase cfoJ. Monooxygenases cfoF, cfoG, and P450 cfoH are responsible for the hydroxylation of the flavonoid skeleton at sites C3, C8, and C2', respectively. Like cfoF, the dehydratase cfoI plays also a role in the hydroxylation of position C3. Methyltransferases cfoB, cfoC, and cfoD then catalyze the methylation of C7-OH, C8-OH, and C3-OH, respectively. Finally, the monooxygenase cfoE is responsible for the chlorination of flavonoid at position C3'. The sequence is that of Monooxygenase cfoE from Aspergillus candidus.